A 338-amino-acid polypeptide reads, in one-letter code: Cytochrome bd ubiquinol oxidase subunit 2 (338 aa).

The next 9 membrane-spanning stretches (helical) occupy residues Leu-7 to Phe-27, Ile-50 to Ala-70, Trp-75 to Met-95, Val-119 to Phe-139, Ile-163 to Leu-183, Met-196 to Ala-216, Glu-227 to Ile-247, Phe-256 to Pro-276, and Ile-306 to Phe-326.

Belongs to the cytochrome ubiquinol oxidase subunit 2 family. As to quaternary structure, heterodimer of subunits I and II. Heme b serves as cofactor. The cofactor is heme d cis-diol.

It localises to the cell membrane. It carries out the reaction 2 a ubiquinol + O2(in) + 4 H(+)(in) = 2 a ubiquinone + 2 H2O(in) + 4 H(+)(out). This Bacillus subtilis (strain 168) protein is Cytochrome bd ubiquinol oxidase subunit 2 (cydB).